We begin with the raw amino-acid sequence, 628 residues long: DNA primase (628 aa).

Residues 40–64 (CPFHEERSPSFSVAEDKQIFHCFGC) form a CHC2-type zinc finger. In terms of domain architecture, Toprim spans 269–351 (NTVLLFEGFM…DLSIVSIPEK (83 aa)). Mg(2+) contacts are provided by Glu275, Asp319, and Asp321.

Belongs to the DnaG primase family. As to quaternary structure, monomer. Interacts with DnaB. Zn(2+) is required as a cofactor. The cofactor is Mg(2+).

It carries out the reaction ssDNA + n NTP = ssDNA/pppN(pN)n-1 hybrid + (n-1) diphosphate.. RNA polymerase that catalyzes the synthesis of short RNA molecules used as primers for DNA polymerase during DNA replication. This Enterococcus faecalis (strain ATCC 700802 / V583) protein is DNA primase.